We begin with the raw amino-acid sequence, 477 residues long: Tripartite motif-containing protein 72 (477 aa).

Residues cysteine 14, cysteine 17, cysteine 29, histidine 31, cysteine 34, cysteine 37, cysteine 53, cysteine 56, cysteine 86, histidine 89, cysteine 97, aspartate 100, cysteine 105, cysteine 108, histidine 114, and histidine 117 each contribute to the Zn(2+) site. The RING-type zinc finger occupies 14 to 57; sequence CPLCLQLFDAPVTAECGHSFCRACLIRVAGEPADDGTVACPCCQ. The B box-type zinc finger occupies 81–122; sequence VPQGHCEEHLDPLSIYCEQDRTLVCGVCASLGSHRGHRLLPA. The stretch at 135–232 forms a coiled coil; the sequence is QQKAQLQEAC…EKVLEEVADK (98 aa). Position 144 is an S-nitrosocysteine (cysteine 144). Serine 255 carries the phosphoserine modification. The region spanning 271–475 is the B30.2/SPRY domain; that stretch reads DFKFQVWKKM…PLLLVGPDSE (205 aa).

This sequence belongs to the TRIM/RBCC family. Homodimer. Homooligomer; disulfide-linked. Oligomerizes on the phospholipid membrane. Interacts with DYSF and CAV3. Post-translationally, disulfide bond formation at Cys-242 occurs in case of membrane damage that cause the entry of the oxidized milieu of the extracellular space, resulting in homooligomerization. S-nitrosylation at Cys-144 stabilizes TRIM72 and protects against oxidation-induced protein degradation and cell death.

It localises to the cell membrane. The protein resides in the sarcolemma. Its subcellular location is the cytoplasmic vesicle membrane. The enzyme catalyses S-ubiquitinyl-[E2 ubiquitin-conjugating enzyme]-L-cysteine + [acceptor protein]-L-lysine = [E2 ubiquitin-conjugating enzyme]-L-cysteine + N(6)-ubiquitinyl-[acceptor protein]-L-lysine.. It participates in protein modification; protein ubiquitination. Its activity is regulated as follows. Specifically binds phosphatidylserine. The binding to phospholipids enhances ubiquitination activity. Functionally, muscle-specific E3 ubiquitin-protein ligase that plays a central role in cell membrane repair by nucleating the assembly of the repair machinery at injury sites. Its ubiquitination activity is mediated by E2 ubiquitin-conjugating enzymes UBE2D1, UBE2D2 and UBE2D3. Acts as a sensor of oxidation: upon membrane damage, entry of extracellular oxidative environment results in disulfide bond formation and homooligomerization at the injury site. This oligomerization acts as a nucleation site for recruitment of TRIM72-containing vesicles to the injury site, leading to membrane patch formation. Probably acts upstream of the Ca(2+)-dependent membrane resealing process. Required for transport of DYSF to sites of cell injury during repair patch formation. Regulates membrane budding and exocytosis. May be involved in the regulation of the mobility of KCNB1-containing endocytic vesicles. This is Tripartite motif-containing protein 72 from Rattus norvegicus (Rat).